Here is a 305-residue protein sequence, read N- to C-terminus: Sulfate adenylyltransferase subunit 2 (305 aa).

It belongs to the PAPS reductase family. CysD subfamily. As to quaternary structure, heterodimer composed of CysD, the smaller subunit, and CysN.

It carries out the reaction sulfate + ATP + H(+) = adenosine 5'-phosphosulfate + diphosphate. It participates in sulfur metabolism; hydrogen sulfide biosynthesis; sulfite from sulfate: step 1/3. Functionally, with CysN forms the ATP sulfurylase (ATPS) that catalyzes the adenylation of sulfate producing adenosine 5'-phosphosulfate (APS) and diphosphate, the first enzymatic step in sulfur assimilation pathway. APS synthesis involves the formation of a high-energy phosphoric-sulfuric acid anhydride bond driven by GTP hydrolysis by CysN coupled to ATP hydrolysis by CysD. This chain is Sulfate adenylyltransferase subunit 2, found in Pseudomonas fluorescens (strain Pf0-1).